We begin with the raw amino-acid sequence, 246 residues long: 14-3-3 protein eta (246 aa).

An N-acetylglycine modification is found at G2. A phosphoserine mark is found at S25 and S59.

The protein belongs to the 14-3-3 family. Homodimer. Interacts with many nuclear hormone receptors and cofactors including AR, ESR1, ESR2, MC2R, NR3C1, NRIP1, PPARBP and THRA. Interacts with ABL1 (phosphorylated form); the interaction retains it in the cytoplasm. Interacts with ARHGEF28 and CDK16. Weakly interacts with CDKN1B. Interacts with GAB2. Interacts with KCNK18 in a phosphorylation-dependent manner. Interacts with SAMSN1. Interacts with the 'Ser-241' phosphorylated form of PDPK1. Interacts with the 'Thr-369' phosphorylated form of DAPK2. Interacts with PI4KB, TBC1D22A and TBC1D22B. Interacts with SLITRK1. Interacts with MEFV. Phosphorylated on Ser-59 by protein kinase C delta type catalytic subunit in a sphingosine-dependent fashion. As to expression, expressed mainly in the brain and present in other tissues albeit at lower levels.

Adapter protein implicated in the regulation of a large spectrum of both general and specialized signaling pathways. Binds to a large number of partners, usually by recognition of a phosphoserine or phosphothreonine motif. Binding generally results in the modulation of the activity of the binding partner. Negatively regulates the kinase activity of PDPK1. The chain is 14-3-3 protein eta (YWHAH) from Homo sapiens (Human).